The following is a 113-amino-acid chain: Dynein light chain Tctex-type 1 (113 aa).

An N-acetylmethionine modification is found at Met1. The interval 41–113 is interaction with GNB1; sequence QWTTNVVEQT…CIVSAFGLSI (73 aa).

Belongs to the dynein light chain Tctex-type family. In terms of assembly, homodimer. The cytoplasmic dynein 1 complex consists of two catalytic heavy chains (HCs) and a number of non-catalytic subunits presented by intermediate chains (ICs), light intermediate chains (LICs) and light chains (LCs); the composition seems to vary in respect to the IC, LIC and LC composition. The heavy chain homodimer serves as a scaffold for the probable homodimeric assembly of the non-catalytic subunits. The ICs and LICs bind directly to the HC dimer and the LCs assemble on the IC dimer. DYNLT1 and DYNLT3 compete for association with dynein IC (DYNC1I1 or DYNC1I2). Self-associates. Interacts with RHO. Interacts with DYNC1I1 and DYNC1I2. Interacts with DOC2A, DOC2B and SCN10A. Interacts with PVR. Interacts with SVIL isoform 2. Interacts with GNB1; the interaction occurs in presence of guanine nucleotide-binding protein G(T) subunit gamma; the interaction diminishes the association of DYNLT1 with dynein IC (DYNC1I1 or DYNC1I2). Interacts with GNB2, GNB3 and GNB5; the interactions occur in presence of guanine nucleotide-binding protein G(T) subunit gamma. Interacts with ACVR2B and ARHGEF2. Interacts with DNAI4. Interacts with CFAP61. Post-translationally, phosphorylated by BMPR2. The phosphorylation status is proposed to regulate the association with the cytoplasmic dynein complex and may have role in cytoplasmic dynein cargo release.

It is found in the golgi apparatus. Its subcellular location is the cytoplasm. It localises to the cytoskeleton. The protein resides in the spindle. In terms of biological role, acts as one of several non-catalytic accessory components of the cytoplasmic dynein 1 complex that are thought to be involved in linking dynein to cargos and to adapter proteins that regulate dynein function. Cytoplasmic dynein 1 acts as a motor for the intracellular retrograde motility of vesicles and organelles along microtubules. Binds to transport cargos and is involved in apical cargo transport such as rhodopsin-bearing vesicles in polarized epithelia. May also be a accessory component of axonemal dynein. Its function is as follows. Plays a role in neuronal morphogenesis; the function is independent of cytoplasmic dynein and seems to be coupled to regulation of the actin cytoskeleton by enhancing Rac1 activity. The function in neurogenesis may be regulated by association with a G-protein beta-gamma dimer. May function as a receptor-independent activator of heterotrimeric G-protein signaling; the activation appears to be independent of a nucleotide exchange. Plays a role in regulating neurogenesis; inhibits the genesis of neurons from precursor cells during cortical development presumably by antagonizing ARHGEF2. Involved in the regulation of mitotic spindle orientation. Unrelated to the role in retrograde microtubule-associated movement may play a role in the dimerization of cytoplasmic proteins/domains such as for ACVR2B. Binds to the cytoplasmic domain of ACVR2B and, in vitro, inhibits ACVR2B signaling. This is Dynein light chain Tctex-type 1 (DYNLT1) from Bos taurus (Bovine).